The chain runs to 434 residues: Zinc finger and BTB domain-containing protein 8A (434 aa).

In terms of domain architecture, BTB spans Cys24–Gly92. The segment at Ser134–Glu238 is disordered. Phosphoserine occurs at positions 161 and 167. Residues Lys172, Lys176, and Lys193 each participate in a glycyl lysine isopeptide (Lys-Gly) (interchain with G-Cter in SUMO2) cross-link. Residues Ala192–Lys202 show a composition bias toward basic and acidic residues. The segment covering Gln226–Glu238 has biased composition (polar residues). 2 C2H2-type zinc fingers span residues Phe275–His297 and Tyr303–His326. Residue Lys430 forms a Glycyl lysine isopeptide (Lys-Gly) (interchain with G-Cter in SUMO2) linkage.

The protein localises to the nucleus. May be involved in transcriptional regulation. This chain is Zinc finger and BTB domain-containing protein 8A (Zbtb8a), found in Mus musculus (Mouse).